The primary structure comprises 215 residues: Protein GET1 (215 aa).

Over 1-4 the chain is Lumenal; the sequence is MPSL. A helical membrane pass occupies residues 5-24; the sequence is LILIFTIEVAVELINTIGAA. At 25 to 110 the chain is on the cytoplasmic side; it reads TINNLLWRIF…NFDKYITGIR (86 aa). Residues 72-104 adopt a coiled-coil conformation; that stretch reads AKWAKLRRQHDKLLEQLEKKKAALDSTKGNFDK. Residues 111–131 form a helical membrane-spanning segment; that stretch reads WVGTQGLRYFLPFWYAKVPMF. The Lumenal segment spans residues 132-155; the sequence is WLPYGWFPYYAEWLVSFPRAPMGS. Residues 156–172 traverse the membrane as a helical segment; sequence VSIASWQLACTGFVVLI. The Cytoplasmic portion of the chain corresponds to 173–215; that stretch reads KDAITALVVFVMGMRQSNVKQAVPVKAVSGEKASDEKEGKKEL.

This sequence belongs to the WRB/GET1 family. In terms of assembly, interacts with GET3.

Its subcellular location is the endoplasmic reticulum membrane. Its function is as follows. Required for the post-translational delivery of tail-anchored (TA) proteins to the endoplasmic reticulum. Acts as a membrane receptor for soluble GET3, which recognizes and selectively binds the transmembrane domain of TA proteins in the cytosol. The sequence is that of Protein GET1 from Pyricularia oryzae (strain 70-15 / ATCC MYA-4617 / FGSC 8958) (Rice blast fungus).